Consider the following 117-residue polypeptide: UPF0342 protein LGAS_1451 (117 aa).

Belongs to the UPF0342 family.

The sequence is that of UPF0342 protein LGAS_1451 from Lactobacillus gasseri (strain ATCC 33323 / DSM 20243 / BCRC 14619 / CIP 102991 / JCM 1131 / KCTC 3163 / NCIMB 11718 / NCTC 13722 / AM63).